A 594-amino-acid chain; its full sequence is (E)-beta-ocimene synthase TPS6FN (594 aa).

Residues R303, D340, D344, R489, and N492 each contribute to the (2E)-geranyl diphosphate site. 2 residues coordinate Mg(2+): D340 and D344. Positions 340–344 (DDIYD) match the DDXXD motif motif. Residues N492, T496, and E500 each coordinate Mg(2+).

The protein belongs to the terpene synthase family. Tpsb subfamily. Mg(2+) serves as cofactor. It depends on Mn(2+) as a cofactor. Expressed in glandular trichomes two to four weeks after flowering onset.

It carries out the reaction (2E)-geranyl diphosphate = (E)-beta-ocimene + diphosphate. The catalysed reaction is (2E)-geranyl diphosphate = (Z)-beta-ocimene + diphosphate. Its pathway is secondary metabolite biosynthesis; terpenoid biosynthesis. Involved in monoterpene (C10) olefins biosynthesis, constituants of cannabinoids and terpenoids-rich resins. Catalyzes mainly the conversion of (2E)-geranyl diphosphate to (E)-beta-ocimene, and also produces minor products such as (Z)-beta-ocimene. In Cannabis sativa (Hemp), this protein is (E)-beta-ocimene synthase TPS6FN.